A 2346-amino-acid chain; its full sequence is Acetyl-CoA carboxylase 1 (2346 aa).

Met-1 bears the N-acetylmethionine mark. A phosphoserine mark is found at Ser-5, Ser-23, Ser-25, Ser-29, Ser-34, Ser-48, Ser-50, and Ser-53. Thr-58 is subject to Phosphothreonine. A phosphoserine mark is found at Ser-78 and Ser-80. The 502-residue stretch at 117-618 (VIEKVLIANN…DTGWLDRLIA (502 aa)) folds into the Biotin carboxylation domain. Residues 275 to 466 (SKRILNVPQE…LPAAQLQIAM (192 aa)) form the ATP-grasp domain. 315–320 (GGGGKG) contacts ATP. Residues Glu-424, Glu-437, and Asn-439 each contribute to the Mg(2+) site. Mn(2+) contacts are provided by Glu-424, Glu-437, and Asn-439. Residue Arg-441 is part of the active site. Ser-488 carries the post-translational modification Phosphoserine. The residue at position 610 (Thr-610) is a Phosphothreonine. One can recognise a Biotinyl-binding domain in the interval 745 to 819 (FEKENDPSVM…DPGCVLAKMQ (75 aa)). Residue Lys-786 is modified to N6-biotinyllysine. 4 positions are modified to phosphoserine: Ser-835, Ser-1201, Ser-1216, and Ser-1218. A Phosphothreonine modification is found at Thr-1227. Phosphoserine occurs at positions 1259, 1263, and 1273. Lys-1334 carries the N6-acetyllysine modification. Positions 1576–1914 (PYVTKDLLQS…SVHSSVPLLN (339 aa)) constitute a CoA carboxyltransferase N-terminal domain. A carboxyltransferase region spans residues 1576 to 2234 (PYVTKDLLQS…EDLVKKKIHN (659 aa)). Positions 1823, 2127, and 2129 each coordinate CoA. The CoA carboxyltransferase C-terminal domain occupies 1918-2234 (PIDRIIEFVP…EDLVKKKIHN (317 aa)). Thr-2153 is modified (phosphothreonine).

In terms of assembly, monomer, homodimer, and homotetramer. Can form filamentous polymers. Interacts in its inactive phosphorylated form with the BRCT domains of BRCA1 which prevents ACACA dephosphorylation and inhibits lipid synthesis. Interacts with MID1IP1; interaction with MID1IP1 promotes oligomerization and increases its activity. It depends on Mg(2+) as a cofactor. Mn(2+) is required as a cofactor. The cofactor is biotin. Post-translationally, phosphorylation on Ser-1263 is required for interaction with BRCA1. Phosphorylation at Ser-80 by AMPK inactivates enzyme activity. In terms of processing, the biotin cofactor is covalently attached to the central biotinyl-binding domain and is required for the catalytic activity. Expressed in brain, placenta, skeletal muscle, renal, pancreatic and adipose tissues; expressed at low level in pulmonary tissue; not detected in the liver.

The protein localises to the cytoplasm. It localises to the cytosol. The catalysed reaction is hydrogencarbonate + acetyl-CoA + ATP = malonyl-CoA + ADP + phosphate + H(+). It participates in lipid metabolism; malonyl-CoA biosynthesis; malonyl-CoA from acetyl-CoA: step 1/1. Inhibited by phosphorylation. Citrate promotes oligomerization of the protein into filaments that correspond to the most active form of the carboxylase. Inhibited by palmitoyl-CoA. In terms of biological role, cytosolic enzyme that catalyzes the carboxylation of acetyl-CoA to malonyl-CoA, the first and rate-limiting step of de novo fatty acid biosynthesis. This is a 2 steps reaction starting with the ATP-dependent carboxylation of the biotin carried by the biotin carboxyl carrier (BCC) domain followed by the transfer of the carboxyl group from carboxylated biotin to acetyl-CoA. This chain is Acetyl-CoA carboxylase 1, found in Homo sapiens (Human).